Reading from the N-terminus, the 90-residue chain is DNA-binding protein HU-alpha (90 aa).

It belongs to the bacterial histone-like protein family. Heterodimer of an alpha and a beta chain.

Functionally, histone-like DNA-binding protein which is capable of wrapping DNA to stabilize it, and thus to prevent its denaturation under extreme environmental conditions. The polypeptide is DNA-binding protein HU-alpha (hupA) (Serratia marcescens).